A 445-amino-acid chain; its full sequence is Glutamyl-tRNA reductase (445 aa).

Residues 49 to 52 (TCNR), Ser-109, 114 to 116 (ETQ), and Gln-120 each bind substrate. The Nucleophile role is filled by Cys-50. 189–194 (GAGEMS) lines the NADP(+) pocket.

The protein belongs to the glutamyl-tRNA reductase family. Homodimer.

The catalysed reaction is (S)-4-amino-5-oxopentanoate + tRNA(Glu) + NADP(+) = L-glutamyl-tRNA(Glu) + NADPH + H(+). It participates in porphyrin-containing compound metabolism; protoporphyrin-IX biosynthesis; 5-aminolevulinate from L-glutamyl-tRNA(Glu): step 1/2. Its function is as follows. Catalyzes the NADPH-dependent reduction of glutamyl-tRNA(Glu) to glutamate 1-semialdehyde (GSA). This Staphylococcus carnosus (strain TM300) protein is Glutamyl-tRNA reductase.